The sequence spans 2669 residues: Nucleosome-remodeling factor subunit NURF301 (2669 aa).

Basic residues predominate over residues 1 to 12; sequence MSGRGSRKRGRP. Residues 1–121 form a required for function in nucleosome sliding region; sequence MSGRGSRKRG…EEDKSDNEDD (121 aa). The disordered stretch occupies residues 1-125; that stretch reads MSGRGSRKRG…SDNEDDMLLT (125 aa). A DNA-binding region (a.T hook) is located at residues 6 to 18; the sequence is SRKRGRPPKTPNE. The segment covering 38 to 56 has biased composition (polar residues); sequence GKSQPSTPSASRGISPQSD. Phosphoserine is present on residues Ser40, Ser52, Ser55, Ser59, and Ser62. Basic residues predominate over residues 66-82; the sequence is HTNRSRGSAAKRGRGRK. Residues 109 to 125 show a composition bias toward acidic residues; the sequence is GDSEEDKSDNEDDMLLT. Positions 188–248 constitute a DDT domain; it reads NTHVLRALSI…LKAILREEDA (61 aa). The PHD-type 1 zinc finger occupies 339–386; that stretch reads DDHCRVCHRLGDLLCCETCPAVYHLECVDPPMNDVPTEDWQCGLCRSH. Residues 460-515 adopt a coiled-coil conformation; the sequence is RLHSQITERRDEIERQMKLTETLTNEHKHTKRSVIEIEQEAKNELLEKEVLDEDEK. A disordered region spans residues 505-538; it reads LEKEVLDEDEKDGDAKSESQSIEGTKKQEECKMV. Residues 528–537 show a composition bias toward basic and acidic residues; that stretch reads GTKKQEECKM. Positions 688-720 form a coiled coil; it reads LQRITSAEREERKKLEKREKRERDDEEERNRLA. Disordered stretches follow at residues 1026-1048, 1135-1159, and 1406-1425; these read EGKR…AESE, TGLN…NQKS, and RSGL…EPQI. Ser1417 is modified (phosphoserine). Thr1527 is modified (phosphothreonine). Positions 1559 to 1590 are enriched in low complexity; the sequence is SRTGGANTAAAAASPTVGGSTSTQSNPSTSTP. Disordered stretches follow at residues 1559–1596, 2181–2203, and 2283–2307; these read SRTG…VQII, INNG…ITTN, and TNEW…QTDD. Residues 2283–2293 show a composition bias toward polar residues; that stretch reads TNEWETCSRGS. Residues 2338–2373 adopt a coiled-coil conformation; that stretch reads KNDEVAELGEQKQSQLERHKELLKKNILRKRSLLER. Residues 2382–2432 form a disordered region; that stretch reads DVKTKVQRHVRPLSNASPDEQSENERSGEPNLDFKRTEVQNPRHGAGRPKK. Phosphoserine is present on residues Ser2395, Ser2398, and Ser2403. Residues 2404-2419 are compositionally biased toward basic and acidic residues; sequence ENERSGEPNLDFKRTE. A PHD-type 2 zinc finger spans residues 2481-2546; sequence EFICIDCKRA…EYVCPECQRK (66 aa). One can recognise a Bromo domain in the interval 2556–2660; that stretch reads KLTSNDVEEL…SYFVQKIKNF (105 aa).

Belongs to the BPTF family. Component of the NURF complex composed of Caf1-55, E(bx), Nurf-38 and Iswi. Interacts with Trl. Interacts with histone H3-K4Me3.

It localises to the nucleus. Functionally, histone-binding component of NURF (nucleosome remodeling factor), a complex which catalyzes ATP-dependent nucleosome sliding and facilitates transcription of chromatin. Specifically recognizes H3 tails trimethylated on 'Lys-4' (H3K4me3), which mark transcription start sites of virtually all active genes. Required for homeotic gene expression, proper larval blood cell development, normal male X chromosome morphology, ecdysteroid signaling and metamorphosis. The sequence is that of Nucleosome-remodeling factor subunit NURF301 (E(bx)) from Drosophila melanogaster (Fruit fly).